Here is a 333-residue protein sequence, read N- to C-terminus: Phosphate acyltransferase (333 aa).

It belongs to the PlsX family. As to quaternary structure, homodimer. Probably interacts with PlsY.

It is found in the cytoplasm. The catalysed reaction is a fatty acyl-[ACP] + phosphate = an acyl phosphate + holo-[ACP]. The protein operates within lipid metabolism; phospholipid metabolism. Catalyzes the reversible formation of acyl-phosphate (acyl-PO(4)) from acyl-[acyl-carrier-protein] (acyl-ACP). This enzyme utilizes acyl-ACP as fatty acyl donor, but not acyl-CoA. The polypeptide is Phosphate acyltransferase (Thermosipho melanesiensis (strain DSM 12029 / CIP 104789 / BI429)).